Reading from the N-terminus, the 339-residue chain is tRNA N6-adenosine threonylcarbamoyltransferase (339 aa).

Residues H111 and H115 each coordinate Fe cation. Substrate contacts are provided by residues 134–138, D167, G180, and N270; that span reads LVSGG. Position 298 (D298) interacts with Fe cation.

Belongs to the KAE1 / TsaD family. Fe(2+) serves as cofactor.

It localises to the cytoplasm. It carries out the reaction L-threonylcarbamoyladenylate + adenosine(37) in tRNA = N(6)-L-threonylcarbamoyladenosine(37) in tRNA + AMP + H(+). Functionally, required for the formation of a threonylcarbamoyl group on adenosine at position 37 (t(6)A37) in tRNAs that read codons beginning with adenine. Is involved in the transfer of the threonylcarbamoyl moiety of threonylcarbamoyl-AMP (TC-AMP) to the N6 group of A37, together with TsaE and TsaB. TsaD likely plays a direct catalytic role in this reaction. The chain is tRNA N6-adenosine threonylcarbamoyltransferase from Alkalilimnicola ehrlichii (strain ATCC BAA-1101 / DSM 17681 / MLHE-1).